We begin with the raw amino-acid sequence, 701 residues long: Elongation factor G (701 aa).

One can recognise a tr-type G domain in the interval 6–285 (HKVRNIGIMA…AVVAYLPNPL (280 aa)). Residues 15–22 (AHIDAGKT), 79–83 (DNPGH), and 133–136 (NKMD) contribute to the GTP site.

This sequence belongs to the TRAFAC class translation factor GTPase superfamily. Classic translation factor GTPase family. EF-G/EF-2 subfamily.

The protein localises to the cytoplasm. Functionally, catalyzes the GTP-dependent ribosomal translocation step during translation elongation. During this step, the ribosome changes from the pre-translocational (PRE) to the post-translocational (POST) state as the newly formed A-site-bound peptidyl-tRNA and P-site-bound deacylated tRNA move to the P and E sites, respectively. Catalyzes the coordinated movement of the two tRNA molecules, the mRNA and conformational changes in the ribosome. The polypeptide is Elongation factor G (fusA) (Micrococcus luteus (Micrococcus lysodeikticus)).